The following is a 484-amino-acid chain: Glutamate--tRNA ligase (484 aa).

Positions 12-22 (PSPTGEPHVGT) match the 'HIGH' region motif. The 'KMSKS' region signature appears at 253 to 257 (KLSKR). Position 256 (lysine 256) interacts with ATP.

The protein belongs to the class-I aminoacyl-tRNA synthetase family. Glutamate--tRNA ligase type 1 subfamily. In terms of assembly, monomer.

The protein resides in the cytoplasm. It catalyses the reaction tRNA(Glu) + L-glutamate + ATP = L-glutamyl-tRNA(Glu) + AMP + diphosphate. Its function is as follows. Catalyzes the attachment of glutamate to tRNA(Glu) in a two-step reaction: glutamate is first activated by ATP to form Glu-AMP and then transferred to the acceptor end of tRNA(Glu). This Rhizobium leguminosarum bv. trifolii (strain WSM2304) protein is Glutamate--tRNA ligase.